A 436-amino-acid polypeptide reads, in one-letter code: Chromosomal replication initiator protein DnaA (436 aa).

Residues 1–80 form a domain I, interacts with DnaA modulators region; sequence MSHEAVWQHV…QAPRFELRVV (80 aa). The tract at residues 80-100 is domain II; sequence VPGVVVQEDIFQAAPAEAPRP. Positions 101-317 are domain III, AAA+ region; sequence KLNPKYTFEN…GALMRAIAFA (217 aa). Residues Gly-145, Gly-147, Lys-148, and Thr-149 each contribute to the ATP site. Positions 318-436 are domain IV, binds dsDNA; it reads SLNGVELTRA…LLRTLREACT (119 aa).

This sequence belongs to the DnaA family. Oligomerizes as a right-handed, spiral filament on DNA at oriC.

It localises to the cytoplasm. Its function is as follows. Plays an essential role in the initiation and regulation of chromosomal replication. ATP-DnaA binds to the origin of replication (oriC) to initiate formation of the DNA replication initiation complex once per cell cycle. Binds the DnaA box (a 9 base pair repeat at the origin) and separates the double-stranded (ds)DNA. Forms a right-handed helical filament on oriC DNA; dsDNA binds to the exterior of the filament while single-stranded (ss)DNA is stabiized in the filament's interior. The ATP-DnaA-oriC complex binds and stabilizes one strand of the AT-rich DNA unwinding element (DUE), permitting loading of DNA polymerase. After initiation quickly degrades to an ADP-DnaA complex that is not apt for DNA replication. Binds acidic phospholipids. In Thermus thermophilus (strain ATCC BAA-163 / DSM 7039 / HB27), this protein is Chromosomal replication initiator protein DnaA.